Here is a 723-residue protein sequence, read N- to C-terminus: BTB/POZ domain-containing protein 18 (723 aa).

One can recognise a BTB domain in the interval 34 to 102 (CDALLQAEGE…LYTSEMEVSQ (69 aa)). Disordered regions lie at residues 150–176 (APIS…PSPL), 188–350 (EGAH…EEGQ), and 370–394 (EPPL…PSGT). 2 stretches are compositionally biased toward polar residues: residues 162–174 (RPQT…QTPS) and 195–205 (NLPNADSLSDT). 2 stretches are compositionally biased toward low complexity: residues 217 to 227 (QESRSSPSSQR) and 271 to 286 (TSTP…SMPT). Composition is skewed to basic and acidic residues over residues 303 to 312 (QGVDKQKPGE) and 327 to 336 (KPAENKKQSP). Residue Ser-414 is modified to Phosphoserine. The disordered stretch occupies residues 603–637 (TPDLEITSSQPLDGQGEKLLHFDSSDPSQRSYNHL). Positions 617 to 626 (QGEKLLHFDS) are enriched in basic and acidic residues. Over residues 627–636 (SDPSQRSYNH) the composition is skewed to polar residues. Ser-682 and Ser-683 each carry phosphoserine. Positions 699–723 (LGPTSVPSVWPDPSSESETEVDILT) are disordered. Residues 713 to 723 (SESETEVDILT) are compositionally biased toward acidic residues.

In terms of tissue distribution, expressed in testis.

The protein localises to the nucleus. Its function is as follows. Specifically required during spermatogenesis to promote expression of piRNA precursors. The piRNA metabolic process mediates the repression of transposable elements during meiosis by forming complexes composed of piRNAs and Piwi proteins and governs the methylation and subsequent repression of transposons, which is essential for the germline integrity. Acts by facilitating transcription elongation at piRNA loci during pachytene. This Mus musculus (Mouse) protein is BTB/POZ domain-containing protein 18.